A 121-amino-acid polypeptide reads, in one-letter code: Large ribosomal subunit protein bL12 (121 aa).

This sequence belongs to the bacterial ribosomal protein bL12 family. As to quaternary structure, homodimer. Part of the ribosomal stalk of the 50S ribosomal subunit. Forms a multimeric L10(L12)X complex, where L10 forms an elongated spine to which 2 to 4 L12 dimers bind in a sequential fashion. Binds GTP-bound translation factors.

Functionally, forms part of the ribosomal stalk which helps the ribosome interact with GTP-bound translation factors. Is thus essential for accurate translation. This chain is Large ribosomal subunit protein bL12, found in Streptococcus suis (strain 98HAH33).